Here is a 316-residue protein sequence, read N- to C-terminus: Retinol dehydrogenase 12 (316 aa).

46–52 (GANTGIG) is a binding site for NADP(+). S175 is a substrate binding site. The active-site Proton acceptor is the Y200.

It belongs to the short-chain dehydrogenases/reductases (SDR) family. In terms of tissue distribution, widely expressed, mostly in retina, kidney, brain, skeletal muscle, pancreas and stomach.

It is found in the endoplasmic reticulum membrane. The catalysed reaction is all-trans-retinol + NADP(+) = all-trans-retinal + NADPH + H(+). It carries out the reaction 11-cis-retinol + NADP(+) = 11-cis-retinal + NADPH + H(+). The enzyme catalyses 9-cis-retinol + NADP(+) = 9-cis-retinal + NADPH + H(+). It catalyses the reaction a 4-hydroxynonen-1-ol + NADP(+) = a 4-hydroxynonenal + NADPH + H(+). The catalysed reaction is (E)-non-2-en-1-ol + NADP(+) = (E)-non-2-enal + NADPH + H(+). It carries out the reaction (Z)-non-6-en-1-ol + NADP(+) = (Z)-non-6-enal + NADPH + H(+). The enzyme catalyses nonan-1-ol + NADP(+) = nonanal + NADPH + H(+). The protein operates within cofactor metabolism; retinol metabolism. In terms of biological role, retinoids dehydrogenase/reductase with a clear preference for NADP. Displays high activity towards 9-cis, 11-cis and all-trans-retinal. Shows very weak activity towards 13-cis-retinol. Also exhibits activity, albeit with lower affinity than for retinaldehydes, towards lipid peroxidation products (C9 aldehydes) such as 4-hydroxynonenal and trans-2-nonenal. May play an important function in photoreceptor cells to detoxify 4-hydroxynonenal and potentially other toxic aldehyde products resulting from lipid peroxidation. Has no dehydrogenase activity towards steroids. This is Retinol dehydrogenase 12 (RDH12) from Homo sapiens (Human).